The following is a 286-amino-acid chain: Protein Bride of doubletime (286 aa).

As to quaternary structure, interacts with dco (via nuclear localization signal). Interacts with Ankrd49; interaction promotes the stability of both complex members.

The protein localises to the cytoplasm. It is found in the cytosol. The protein resides in the cell membrane. Its function is as follows. Functions in planar polarity establishment and circadian rhythms by promoting the activity and localization of dco/dbt. Required for regulating the levels of dco/dbt and per in the nuclei of photoreceptor cells and thereby is involved in normal oscillations of the circadian clock proteins in the eye. In the dark, the cry circadian and rhodopsin visual pathways, activate the accumulation of the protein into Arr1- and Arr2-dependent cytosolic foci which are required for dco localization to photoreceptor nuclei. It is possible that the accumulation into foci results in the dissociation of the protein from dco, thus allowing dco to interact with importins and microtubles for nuclear transport. By promoting nuclei localization and kinase activity of dco towards per, it is essential for regulating normal cycles of per nuclear accumulation in brain circadian neurons and thus is important for normal circadian behavior. Essential for regulating the establishment of planar cell polarity in the wing. Forms a complex with Ankrd49 which likely functions in the regulation of planar polarity by promoting the activity of dco during planar polarity establishment. Within the complex, directly promotes dco activity in regulating phosphorylation and asymmetric localization of core planar polarity proteins such as dsh. This Drosophila melanogaster (Fruit fly) protein is Protein Bride of doubletime.